The following is a 215-amino-acid chain: Probable phosphoglycerate mutase GpmB (215 aa).

Residues 8-15, 21-22, Arg58, Arg60, 82-85, and 151-152 contribute to the substrate site; these read RHGETEWN, QG, ELHM, and GI. Catalysis depends on His9, which acts as the Tele-phosphohistidine intermediate. Catalysis depends on Glu82, which acts as the Proton donor/acceptor.

Belongs to the phosphoglycerate mutase family. GpmB subfamily.

The catalysed reaction is (2R)-2-phosphoglycerate = (2R)-3-phosphoglycerate. The protein operates within carbohydrate degradation; glycolysis; pyruvate from D-glyceraldehyde 3-phosphate: step 3/5. This chain is Probable phosphoglycerate mutase GpmB, found in Serratia proteamaculans (strain 568).